A 186-amino-acid chain; its full sequence is Casparian strip membrane protein 5 (186 aa).

Topologically, residues 1-25 (MKTDAIELGVAKDSTPIGGANRGVS) are cytoplasmic. The helical transmembrane segment at 26–46 (ILDFILRLVALVGTLASAILM) threads the bilayer. The Extracellular segment spans residues 47-73 (GTTNETLPFATQFIRFRAEYDDLPTFT). N-linked (GlcNAc...) asparagine glycosylation occurs at N50. The helical transmembrane segment at 74-94 (FFVVANIVVSGYLLLSLPLSI) threads the bilayer. Over 95 to 106 (VNIVRSTAKNRR) the chain is Cytoplasmic. The chain crosses the membrane as a helical span at residues 107-127 (IILIIFDTAMLALLTAGASAA). The Extracellular segment spans residues 128-156 (AAIVYLAHKGNTRANWFAICQQFNSFCER). The helical transmembrane segment at 157–177 (ISGSLIGSFVGVAVFILLILM) threads the bilayer. Residues 178 to 186 (SASALSRRN) are Cytoplasmic-facing.

It belongs to the Casparian strip membrane proteins (CASP) family. In terms of assembly, homodimer and heterodimers.

The protein localises to the cell membrane. Functionally, regulates membrane-cell wall junctions and localized cell wall deposition. Required for establishment of the Casparian strip membrane domain (CSD) and the subsequent formation of Casparian strips, a cell wall modification of the root endodermis that determines an apoplastic barrier between the intraorganismal apoplasm and the extraorganismal apoplasm and prevents lateral diffusion. This is Casparian strip membrane protein 5 from Ricinus communis (Castor bean).